The sequence spans 550 residues: Methionine--tRNA ligase (550 aa).

The 'HIGH' region signature appears at 13–23 (PYANGPLHFGH). 4 residues coordinate Zn(2+): Cys-145, Cys-148, Cys-158, and Cys-161. The 'KMSKS' region motif lies at 331–335 (QFSKS). Lys-334 contributes to the ATP binding site.

Belongs to the class-I aminoacyl-tRNA synthetase family. MetG type 1 subfamily. Monomer. Zn(2+) is required as a cofactor.

It is found in the cytoplasm. The enzyme catalyses tRNA(Met) + L-methionine + ATP = L-methionyl-tRNA(Met) + AMP + diphosphate. In terms of biological role, is required not only for elongation of protein synthesis but also for the initiation of all mRNA translation through initiator tRNA(fMet) aminoacylation. The chain is Methionine--tRNA ligase from Chlamydia trachomatis serovar L2b (strain UCH-1/proctitis).